The primary structure comprises 317 residues: Small ribosomal subunit biogenesis GTPase RsgA (317 aa).

Residues 88–249 form the CP-type G domain; the sequence is DQYKSKLFAA…LIDSPGFQEF (162 aa). Residues 136-139 and 190-198 contribute to the GTP site; these read NKID and GQSGMGKST. Zn(2+) is bound by residues cysteine 273, cysteine 278, histidine 280, and cysteine 286.

The protein belongs to the TRAFAC class YlqF/YawG GTPase family. RsgA subfamily. Monomer. Associates with 30S ribosomal subunit, binds 16S rRNA. The cofactor is Zn(2+).

The protein localises to the cytoplasm. Its function is as follows. One of several proteins that assist in the late maturation steps of the functional core of the 30S ribosomal subunit. Helps release RbfA from mature subunits. May play a role in the assembly of ribosomal proteins into the subunit. Circularly permuted GTPase that catalyzes slow GTP hydrolysis, GTPase activity is stimulated by the 30S ribosomal subunit. The protein is Small ribosomal subunit biogenesis GTPase RsgA of Paraburkholderia phymatum (strain DSM 17167 / CIP 108236 / LMG 21445 / STM815) (Burkholderia phymatum).